The primary structure comprises 1020 residues: MESYLEENFGGVKAKNSSEEALRRWRKLCGVVKNPKRRFRFTANLDKRGEAQAIKHANHEKLRVAVLVSKAALQFIQGLSLRSEYVVPEEVKAAGFQICADELGSIVEGHDSKKLITHGGVTGIADKLATSPADGLSTAEESIKRRQDVYGLNKFTESEVRSFWVFVWEALQDTTLIILAVCAFVSLVVGIAMEGWPKGAHDGLGIVASILLVVFVTATSDYRQSLQFKDLDKEKKKIQVQVTRNGFRQRLSIYDLLPGDVVHLAIGDQVPADGLFISGFSLLINESSLTGESEPVVVNEDNPFLLSGTKVQDGSCKMLITTVGMRTQWGKLMATLSEGGDDETPLQVKLNGVATIIGKIGLFFAVITFIVLSQGLISKKYHEGLLLSWSGDDALEMLEHFAIAVTIVVVAVPEGLPLAVTLSLAFAMKKMMNDKALVRHLAACETMGSATTICSDKTGTLTTNHMTVVKACICGNIKEVNNPKNASDLCSELPETVVKTLLESIFNNTGGEVVIDQDGKYQILGTPTETALLEFALSLGGNFKAKRDETKIVKMEPFNSTKKRMCVVLKLPGGGCRAHCKGASEIVLAACDKFMDETGAVVPLDKTTADKLNGIIESFANEALRTLCLGYREMEEGFSVEEQIPLQGYTCIGIVGIKDPVRPGVRESVATCRSAGIMVRMVTGDNINTAKAIARECGILTEDGLAIEGPEFREKSLDELLKLIPKIQVMARSSPLDKHTLVKHLRTTFNEVVAVTGDGTNDAPALHEADIGLAMGIAGTEVAKESADVIILDDNFSTIVTVAKWGRSVYVNIQKFVQFQLTVNVVALLVNFSSACFTGNAPLTAVQLLWVNMIMDTLGALALATEPPNDDLMKREPVGRTGKFITNVMWRNILGQSFYQFIVMWYLQTQGKSMFGLDGPDAEVVLNTIIFNSFVFCQVFNEISSREMEKINVLRGILKNYVFLGVLTSTVVFQFIMVQFLGEFANTIPLTRLQWIASVLLGLIGMPISAIIKLLPVGSS.

The Cytoplasmic portion of the chain corresponds to 1–175 (MESYLEENFG…FVWEALQDTT (175 aa)). Residues 21 to 32 (ALRRWRKLCGVV) are interaction with calmodulin. The next 2 helical transmembrane spans lie at 176–196 (LIILAVCAFVSLVVGIAMEGW) and 199–219 (GAHDGLGIVASILLVVFVTAT). Topologically, residues 220 to 263 (SDYRQSLQFKDLDKEKKKIQVQVTRNGFRQRLSIYDLLPGDVVH) are cytoplasmic. Transmembrane regions (helical) follow at residues 264-284 (LAIGDQVPADGLFISGFSLLI) and 352-372 (GVATIIGKIGLFFAVITFIVL). Residues 373 to 400 (SQGLISKKYHEGLLLSWSGDDALEMLEH) are Cytoplasmic-facing. A helical transmembrane segment spans residues 401-421 (FAIAVTIVVVAVPEGLPLAVT). Aspartate 456 serves as the catalytic 4-aspartylphosphate intermediate. Aspartate 758 and aspartate 762 together coordinate Mg(2+). Residues 843–863 (LTAVQLLWVNMIMDTLGALAL) form a helical membrane-spanning segment. The Cytoplasmic segment spans residues 864–887 (ATEPPNDDLMKREPVGRTGKFITN). 2 consecutive transmembrane segments (helical) span residues 888-907 (VMWRNILGQSFYQFIVMWYL) and 924-944 (VVLNTIIFNSFVFCQVFNEIS). At 945-961 (SREMEKINVLRGILKNY) the chain is on the cytoplasmic side. 2 helical membrane-spanning segments follow: residues 962-982 (VFLGVLTSTVVFQFIMVQFLG) and 995-1015 (WIASVLLGLIGMPISAIIKLL). At 1016-1020 (PVGSS) the chain is on the cytoplasmic side.

Belongs to the cation transport ATPase (P-type) (TC 3.A.3) family. Type IIB subfamily.

It is found in the membrane. It catalyses the reaction Ca(2+)(in) + ATP + H2O = Ca(2+)(out) + ADP + phosphate + H(+). Its activity is regulated as follows. Activated by calmodulin. In terms of biological role, this magnesium-dependent enzyme catalyzes the hydrolysis of ATP coupled with the translocation of calcium from the cytosol out of the cell, into the endoplasmic reticulum, or into organelles. In Oryza sativa subsp. japonica (Rice), this protein is Calcium-transporting ATPase 10, plasma membrane-type.